A 473-amino-acid chain; its full sequence is Ribosomal RNA small subunit methyltransferase F (473 aa).

S-adenosyl-L-methionine-binding positions include 123–129 (AAAPGSK), E147, D174, and D192. The Nucleophile role is filled by C245.

Belongs to the class I-like SAM-binding methyltransferase superfamily. RsmB/NOP family.

The protein resides in the cytoplasm. The catalysed reaction is cytidine(1407) in 16S rRNA + S-adenosyl-L-methionine = 5-methylcytidine(1407) in 16S rRNA + S-adenosyl-L-homocysteine + H(+). In terms of biological role, specifically methylates the cytosine at position 1407 (m5C1407) of 16S rRNA. This Vibrio atlanticus (strain LGP32) (Vibrio splendidus (strain Mel32)) protein is Ribosomal RNA small subunit methyltransferase F.